We begin with the raw amino-acid sequence, 258 residues long: Pimeloyl-[acyl-carrier protein] methyl ester esterase (258 aa).

One can recognise an AB hydrolase-1 domain in the interval 16-244; that stretch reads LVLVHGWGMN…QSSHAPFMTE (229 aa). Residues Trp-22, 82–83, and 146–150 contribute to the substrate site; these read SL and FMALQ. The Nucleophile role is filled by Ser-82. Catalysis depends on residues Asp-210 and His-238. His-238 lines the substrate pocket.

This sequence belongs to the AB hydrolase superfamily. Carboxylesterase BioH family. Monomer.

The protein resides in the cytoplasm. It catalyses the reaction 6-carboxyhexanoyl-[ACP] methyl ester + H2O = 6-carboxyhexanoyl-[ACP] + methanol + H(+). It participates in cofactor biosynthesis; biotin biosynthesis. Its function is as follows. The physiological role of BioH is to remove the methyl group introduced by BioC when the pimeloyl moiety is complete. It allows to synthesize pimeloyl-ACP via the fatty acid synthetic pathway through the hydrolysis of the ester bonds of pimeloyl-ACP esters. The polypeptide is Pimeloyl-[acyl-carrier protein] methyl ester esterase (Vibrio atlanticus (strain LGP32) (Vibrio splendidus (strain Mel32))).